The following is a 665-amino-acid chain: Sodium-dependent phosphate transporter 1-B (665 aa).

The next 6 membrane-spanning stretches (helical) occupy residues 26–46, 67–87, 107–127, 163–183, 202–222, and 235–255; these read YMWL…SVGA, ACIL…AKVS, LMAG…AASF, IVAS…VLFY, ALPF…MFTG, and GVLL…WFAV. Disordered stretches follow at residues 294–345 and 423–442; these read VPEE…APKT and ESEF…AQER. Positions 296–306 are enriched in low complexity; the sequence is EESSVLSSSTP. Residues 329–338 show a composition bias toward basic and acidic residues; the sequence is ADQKDCKESD. 4 helical membrane passes run 499–519, 548–568, 588–608, and 638–658; these read VSML…FAHG, TPIW…WVWG, FSIE…GLPV, and IFMA…AIMA.

This sequence belongs to the inorganic phosphate transporter (PiT) (TC 2.A.20) family.

Its subcellular location is the membrane. Its function is as follows. Sodium-phosphate symporter which plays a fundamental housekeeping role in phosphate transport. This Danio rerio (Zebrafish) protein is Sodium-dependent phosphate transporter 1-B (slc20a1b).